Consider the following 133-residue polypeptide: Inhibitor of g-type lysozyme (133 aa).

The N-terminal stretch at 1-22 is a signal peptide; it reads MKIKSIRKAVLLLALLTSTSFA.

Its subcellular location is the periplasm. Inhibits activity of g-type lysozyme, which confers increased lysozyme tolerance to the bacterium. The polypeptide is Inhibitor of g-type lysozyme (pliG) (Escherichia coli (strain K12)).